A 338-amino-acid polypeptide reads, in one-letter code: tRNA dimethylallyltransferase (338 aa).

Glycine 13–threonine 20 is a binding site for ATP. Threonine 15–threonine 20 lines the substrate pocket. 2 interaction with substrate tRNA regions span residues aspartate 38–leucine 41 and glutamine 162–arginine 166.

This sequence belongs to the IPP transferase family. As to quaternary structure, monomer. The cofactor is Mg(2+).

The catalysed reaction is adenosine(37) in tRNA + dimethylallyl diphosphate = N(6)-dimethylallyladenosine(37) in tRNA + diphosphate. Catalyzes the transfer of a dimethylallyl group onto the adenine at position 37 in tRNAs that read codons beginning with uridine, leading to the formation of N6-(dimethylallyl)adenosine (i(6)A). The protein is tRNA dimethylallyltransferase of Cellvibrio japonicus (strain Ueda107) (Pseudomonas fluorescens subsp. cellulosa).